Reading from the N-terminus, the 120-residue chain is Large ribosomal subunit protein uL22 (120 aa).

It belongs to the universal ribosomal protein uL22 family. Part of the 50S ribosomal subunit.

In terms of biological role, this protein binds specifically to 23S rRNA; its binding is stimulated by other ribosomal proteins, e.g. L4, L17, and L20. It is important during the early stages of 50S assembly. It makes multiple contacts with different domains of the 23S rRNA in the assembled 50S subunit and ribosome. Its function is as follows. The globular domain of the protein is located near the polypeptide exit tunnel on the outside of the subunit, while an extended beta-hairpin is found that lines the wall of the exit tunnel in the center of the 70S ribosome. The polypeptide is Large ribosomal subunit protein uL22 (Corynebacterium urealyticum (strain ATCC 43042 / DSM 7109)).